The sequence spans 133 residues: MAKRKQATATRTRRRDRKNVEVGVAHIRSTFNNTIVTITDPHGNAISWSSAGSLGFKGSRKSTPFAAQMAAEAAARVAMEHGMRSLEVSVKGPGAGREAAIRSLQATGLEVNMIKDVTPIPHNGCRPPKRRRV.

The protein belongs to the universal ribosomal protein uS11 family. In terms of assembly, part of the 30S ribosomal subunit. Interacts with proteins S7 and S18. Binds to IF-3.

Located on the platform of the 30S subunit, it bridges several disparate RNA helices of the 16S rRNA. Forms part of the Shine-Dalgarno cleft in the 70S ribosome. This is Small ribosomal subunit protein uS11 from Brevibacillus brevis (strain 47 / JCM 6285 / NBRC 100599).